We begin with the raw amino-acid sequence, 376 residues long: Succinyl-diaminopimelate desuccinylase (376 aa).

His67 serves as a coordination point for Zn(2+). Residue Asp69 is part of the active site. Asp100 serves as a coordination point for Zn(2+). The active-site Proton acceptor is Glu134. 3 residues coordinate Zn(2+): Glu135, Glu163, and His349.

It belongs to the peptidase M20A family. DapE subfamily. As to quaternary structure, homodimer. Requires Zn(2+) as cofactor. It depends on Co(2+) as a cofactor.

It carries out the reaction N-succinyl-(2S,6S)-2,6-diaminopimelate + H2O = (2S,6S)-2,6-diaminopimelate + succinate. Its pathway is amino-acid biosynthesis; L-lysine biosynthesis via DAP pathway; LL-2,6-diaminopimelate from (S)-tetrahydrodipicolinate (succinylase route): step 3/3. Catalyzes the hydrolysis of N-succinyl-L,L-diaminopimelic acid (SDAP), forming succinate and LL-2,6-diaminopimelate (DAP), an intermediate involved in the bacterial biosynthesis of lysine and meso-diaminopimelic acid, an essential component of bacterial cell walls. This is Succinyl-diaminopimelate desuccinylase from Shewanella sediminis (strain HAW-EB3).